A 946-amino-acid chain; its full sequence is Villin-4 (946 aa).

Gelsolin-like repeat units lie at residues 28–109, 152–219, 274–339, and 641–715; these read NFKP…ETEK, VHVK…EDGK, LEHE…TIMF, and EIHH…PQFF. Disordered regions lie at residues 744–783 and 846–902; these read ATPSLDKPKRRTPAFSGRNAGQDKSQQRTRSMSHSPERHR and TKST…PAPD. Over residues 765–777 the composition is skewed to polar residues; the sequence is QDKSQQRTRSMSH. Residues 874–883 are compositionally biased toward acidic residues; the sequence is SENEPEDDEN. The region spanning 881–946 is the HP domain; that stretch reads DENSTIYPYE…NRLKSDLQLF (66 aa).

Belongs to the villin/gelsolin family.

It is found in the cytoplasm. The protein localises to the cytoskeleton. Its function is as follows. Ca(2+)-regulated actin-binding protein. Binds actin microfilaments (MFs). Involved in actin filament bundling, severing and capping. Caps the barbed end of actin filaments and is able to sever them in a calcium-dependent manner. This chain is Villin-4, found in Oryza sativa subsp. indica (Rice).